We begin with the raw amino-acid sequence, 879 residues long: Aminopeptidase M1 (879 aa).

The tract at residues His98–Val205 is required for membrane association. Substrate contacts are provided by residues Glu138 and Gly271 to Asn275. A Zn(2+)-binding site is contributed by His307. The active-site Proton acceptor is Glu308. 2 residues coordinate Zn(2+): His311 and Glu330. A Dileucine internalization motif motif is present at residues Leu728–Leu729.

This sequence belongs to the peptidase M1 family. In terms of assembly, homodimer. Interacts with N-1-naphthylphthalamic acid (NPA). Requires Zn(2+) as cofactor. Ubiquitous with preferential expression in 5 days-old seedlings, roots, young flowers, upper inflorescence stems, and rosette leaves.

The protein resides in the membrane. Its subcellular location is the microsome membrane. It is found in the cytoplasm. It carries out the reaction Release of an N-terminal amino acid, Xaa-|-Yaa- from a peptide, amide or arylamide. Xaa is preferably Ala, but may be most amino acids including Pro (slow action). When a terminal hydrophobic residue is followed by a prolyl residue, the two may be released as an intact Xaa-Pro dipeptide.. Its function is as follows. Metallopeptidase that binds to the auxin transport inhibitor N-1-naphthylphthalamic acid (NPA). Required for embryonic and seedling development as well as cell cycle progression. Homodimerization is required to proper localization and activity. May play a negative role in the regulation of PIN auxin transport proteins. The protein is Aminopeptidase M1 (APM1) of Arabidopsis thaliana (Mouse-ear cress).